The following is a 379-amino-acid chain: Cytochrome b (379 aa).

The next 4 helical transmembrane spans lie at 33–53 (FGSL…FLAM), 77–98 (WLIR…YLHI), 113–133 (WNIG…GYVL), and 178–198 (FFAF…LHLL). Positions 83 and 97 each coordinate heme b. Residues His182 and His196 each contribute to the heme b site. His201 contacts a ubiquinone. 4 helical membrane-spanning segments follow: residues 226–246 (YKDL…ALFY), 288–308 (LGGV…PILH), 320–340 (ISQL…WIGG), and 347–367 (YIII…VLNP).

It belongs to the cytochrome b family. In terms of assembly, the cytochrome bc1 complex contains 3 respiratory subunits (MT-CYB, CYC1 and UQCRFS1), 2 core proteins (UQCRC1 and UQCRC2) and probably 6 low-molecular weight proteins. The cofactor is heme b.

The protein resides in the mitochondrion inner membrane. Component of the ubiquinol-cytochrome c reductase complex (complex III or cytochrome b-c1 complex) that is part of the mitochondrial respiratory chain. The b-c1 complex mediates electron transfer from ubiquinol to cytochrome c. Contributes to the generation of a proton gradient across the mitochondrial membrane that is then used for ATP synthesis. The polypeptide is Cytochrome b (mt-cyb) (Anguilla mossambica (African longfin eel)).